The chain runs to 881 residues: DNA mismatch repair protein MutS (881 aa).

627-634 (GPNMGGKS) contacts ATP.

This sequence belongs to the DNA mismatch repair MutS family.

This protein is involved in the repair of mismatches in DNA. It is possible that it carries out the mismatch recognition step. This protein has a weak ATPase activity. The protein is DNA mismatch repair protein MutS of Acinetobacter baumannii (strain AB307-0294).